The primary structure comprises 123 residues: MPTINQLIANPRKIQKSRNKVPALEACPQKRGVCTRVYTTTPKKPNSALRKVAKVRLTNGFEVIGYIPGEGHNLQEHSVVMIRGGRVKDLPGVRYHILRGVLDTQGVKNRKQRRSKYGAKRPK.

D89 is modified (3-methylthioaspartic acid).

Belongs to the universal ribosomal protein uS12 family. Part of the 30S ribosomal subunit. Contacts proteins S8 and S17. May interact with IF1 in the 30S initiation complex.

With S4 and S5 plays an important role in translational accuracy. Its function is as follows. Interacts with and stabilizes bases of the 16S rRNA that are involved in tRNA selection in the A site and with the mRNA backbone. Located at the interface of the 30S and 50S subunits, it traverses the body of the 30S subunit contacting proteins on the other side and probably holding the rRNA structure together. The combined cluster of proteins S8, S12 and S17 appears to hold together the shoulder and platform of the 30S subunit. This is Small ribosomal subunit protein uS12 from Methylobacterium nodulans (strain LMG 21967 / CNCM I-2342 / ORS 2060).